A 187-amino-acid polypeptide reads, in one-letter code: High-affinity copper transporter ctrA2 (187 aa).

Helical transmembrane passes span 44–64 (YAGT…LVAF) and 137–157 (AAIF…VMTM).

This sequence belongs to the copper transporter (Ctr) (TC 1.A.56) family. SLC31A subfamily.

The protein localises to the cell membrane. The catalysed reaction is Cu(2+)(in) = Cu(2+)(out). Its function is as follows. High-affinity copper transporter of plasma membrane that mediates copper uptake under low copper conditions. The mechanism driving the transmembrane transport of copper has still to be determined. Acts as a potential virulence factor. This is High-affinity copper transporter ctrA2 from Aspergillus fumigatus (strain ATCC MYA-4609 / CBS 101355 / FGSC A1100 / Af293) (Neosartorya fumigata).